The following is a 142-amino-acid chain: Nucleoside diphosphate kinase (142 aa).

Positions 11, 59, 87, 93, 104, and 114 each coordinate ATP. The active-site Pros-phosphohistidine intermediate is histidine 117.

This sequence belongs to the NDK family. In terms of assembly, homotetramer. Mg(2+) is required as a cofactor.

The protein localises to the cytoplasm. It catalyses the reaction a 2'-deoxyribonucleoside 5'-diphosphate + ATP = a 2'-deoxyribonucleoside 5'-triphosphate + ADP. The catalysed reaction is a ribonucleoside 5'-diphosphate + ATP = a ribonucleoside 5'-triphosphate + ADP. Major role in the synthesis of nucleoside triphosphates other than ATP. The ATP gamma phosphate is transferred to the NDP beta phosphate via a ping-pong mechanism, using a phosphorylated active-site intermediate. The protein is Nucleoside diphosphate kinase of Pectobacterium atrosepticum (strain SCRI 1043 / ATCC BAA-672) (Erwinia carotovora subsp. atroseptica).